The primary structure comprises 533 residues: Probable anion transporter 4, chloroplastic (533 aa).

The next 12 helical transmembrane spans lie at 117–137, 152–172, 179–199, 203–223, 243–263, 267–287, 342–362, 376–396, 417–437, 438–458, 474–494, and 502–522; these read MLALALALCNADRVVMSVAIV, IVQSSFLWGYLISPIAGGTLV, VVMAWGVALWSLATFLTPWAA, LWALLAARAMVGVAEGVALPC, IAMAGFQLGNVVGLMLSPILM, GIYGPFVIFGLSGFLWLLVWL, VIVANSMHSWGFFVILSWMPI, AWFSAVPWSMMAFTGYIAGFW, IGFIGPGIALIGLTTAKQPLV, ASAWLSLAVGLKSFSHLGFLI, MCLTAGTLAAIVGTVGAGFFV, and GFILLTAILYLLSALFYNIYA.

This sequence belongs to the major facilitator superfamily. Sodium/anion cotransporter (TC 2.A.1.14) family. Expressed in leaf veins and root tips.

It is found in the plastid. The protein resides in the chloroplast membrane. Its function is as follows. Inorganic phosphate and probable anion transporter. This chain is Probable anion transporter 4, chloroplastic (ANTR4), found in Arabidopsis thaliana (Mouse-ear cress).